The chain runs to 308 residues: Aspartate carbamoyltransferase catalytic subunit (308 aa).

Residues arginine 58 and threonine 59 each coordinate carbamoyl phosphate. Lysine 86 is an L-aspartate binding site. Residues arginine 108, histidine 136, and glutamine 139 each contribute to the carbamoyl phosphate site. L-aspartate is bound by residues arginine 169 and arginine 227. Positions 268 and 269 each coordinate carbamoyl phosphate.

This sequence belongs to the aspartate/ornithine carbamoyltransferase superfamily. ATCase family. Heterododecamer (2C3:3R2) of six catalytic PyrB chains organized as two trimers (C3), and six regulatory PyrI chains organized as three dimers (R2).

The enzyme catalyses carbamoyl phosphate + L-aspartate = N-carbamoyl-L-aspartate + phosphate + H(+). The protein operates within pyrimidine metabolism; UMP biosynthesis via de novo pathway; (S)-dihydroorotate from bicarbonate: step 2/3. Its function is as follows. Catalyzes the condensation of carbamoyl phosphate and aspartate to form carbamoyl aspartate and inorganic phosphate, the committed step in the de novo pyrimidine nucleotide biosynthesis pathway. The chain is Aspartate carbamoyltransferase catalytic subunit from Chloroflexus aurantiacus (strain ATCC 29366 / DSM 635 / J-10-fl).